We begin with the raw amino-acid sequence, 118 residues long: Large ribosomal subunit protein bL17 (118 aa).

Belongs to the bacterial ribosomal protein bL17 family. Part of the 50S ribosomal subunit. Contacts protein L32.

The protein is Large ribosomal subunit protein bL17 of Thermus thermophilus (strain ATCC BAA-163 / DSM 7039 / HB27).